Reading from the N-terminus, the 107-residue chain is EPIDERMAL PATTERNING FACTOR-like protein 5 (107 aa).

An N-terminal signal peptide occupies residues 1–22 (MGVVLPTLIVYAFLLFFSSSSA). Intrachain disulfides connect cysteine 64-cysteine 98, cysteine 68-cysteine 74, and cysteine 71-cysteine 100.

The protein belongs to the plant cysteine rich small secretory peptide family. Epidermal patterning factor subfamily. Interacts with ERECTA. In terms of tissue distribution, expressed asymetically in the hypocotyl, on the side proximal to the folded cotyledons at germination. Detected in developing flowers, the chalazal region of ovules and near the root apex, but not in inflorescence stems. Expressed in cotyledons, flowers, adult leaves and fruits.

The protein resides in the secreted. Functionally, controls stomatal patterning. Mediates differentiation of stomatal lineage cells to pavement cells and stomatal development inhibition. TMM (AC Q9SSD1) functions to dampen or block CLL1 signaling. Acts as a growth-regulatory ligand for ERECTA family receptors. Promotes fruit growth and fertility. The chain is EPIDERMAL PATTERNING FACTOR-like protein 5 from Arabidopsis thaliana (Mouse-ear cress).